The sequence spans 374 residues: MVLWESPRQCSSWTLCEGFCWLLLLPVMLLIVARPVKLAAFPTSLSDCQTPTGWNCSGYDDRENDLFLCDTNTCKFDGECLRIGDTVTCVCQFKCNNDYVPVCGSNGESYQNECYLRQAACKQQSEILVVSEGSCATDAGSGSGDGVHEGSGETSQKETSTCDICQFGAECDEDAEDVWCVCNIDCSQTNFNPLCASDGKSYDNACQIKEASCQKQEKIEVMSLGRCQDNTTTTTKSEDGHYARTDYAENANKLEESAREHHIPCPEHYNGFCMHGKCEHSINMQEPSCRCDAGYTGQHCEKKDYSVLYVVPGPVRFQYVLIAAVIGTIQIAVICVVVLCITRKCPRSNRIHRQKQNTGHYSSDNTTRASTRLI.

Positions methionine 1 to alanine 40 are cleaved as a signal peptide. Topologically, residues phenylalanine 41–valine 320 are extracellular. Kazal-like domains are found at residues valine 90 to threonine 137 and valine 181 to aspartate 229. Disulfide bonds link cysteine 91/cysteine 121, cysteine 95/cysteine 114, cysteine 103/cysteine 135, cysteine 182/cysteine 213, cysteine 186/cysteine 206, and cysteine 195/cysteine 227. A glycan (N-linked (GlcNAc...) (complex) asparagine; atypical) is linked at asparagine 204. The N-linked (GlcNAc...) asparagine glycan is linked to asparagine 230. In terms of domain architecture, EGF-like spans histidine 261–glutamate 301. 3 cysteine pairs are disulfide-bonded: cysteine 265-cysteine 278, cysteine 273-cysteine 289, and cysteine 291-cysteine 300. The interval lysine 303 to valine 320 is required for shedding. Residues leucine 321–isoleucine 341 form a helical membrane-spanning segment. At threonine 342–isoleucine 374 the chain is on the cytoplasmic side. The tract at residues arginine 353–isoleucine 374 is disordered. A compositionally biased stretch (polar residues) spans glutamine 356–isoleucine 374.

This sequence belongs to the tomoregulin family. Post-translationally, O-glycosylated; contains chondroitin sulfate glycosaminoglycans. In terms of processing, a soluble form (TMEFF2-ECD) is produced by proteolytic shedding. This shedding can be induced by phorbol ester or pro-inflammatory cytokines such as TNFalpha, and is mediated by ADAM17. As to expression, highly expressed in adult and fetal brain, spinal cord and prostate. Expressed in all brain regions except the pituitary gland, with highest levels in amygdala and corpus callosum. Expressed in the pericryptal myofibroblasts and other stromal cells of normal colonic mucosa. Expressed in prostate carcinoma. Down-regulated in colorectal cancer. Present in Alzheimer disease plaques (at protein level). Isoform 3 is expressed weakly in testis and at high levels in normal and cancerous prostate.

The protein resides in the membrane. The protein localises to the secreted. In terms of biological role, may be a survival factor for hippocampal and mesencephalic neurons. The shedded form up-regulates cancer cell proliferation, probably by promoting ERK1/2 phosphorylation. The sequence is that of Tomoregulin-2 (TMEFF2) from Homo sapiens (Human).